The primary structure comprises 133 residues: Small ribosomal subunit protein uS8 (133 aa).

This sequence belongs to the universal ribosomal protein uS8 family. In terms of assembly, part of the 30S ribosomal subunit. Contacts proteins S5 and S12.

One of the primary rRNA binding proteins, it binds directly to 16S rRNA central domain where it helps coordinate assembly of the platform of the 30S subunit. In Mycoplasmoides gallisepticum (strain R(low / passage 15 / clone 2)) (Mycoplasma gallisepticum), this protein is Small ribosomal subunit protein uS8.